Here is a 298-residue protein sequence, read N- to C-terminus: Inosose dehydratase (298 aa).

Belongs to the IolE/MocC family. Glutathione is required as a cofactor. It depends on Co(2+) as a cofactor. The cofactor is Mn(2+).

It catalyses the reaction scyllo-inosose = 3D-3,5/4-trihydroxycyclohexane-1,2-dione + H2O. The protein operates within polyol metabolism; myo-inositol degradation into acetyl-CoA; acetyl-CoA from myo-inositol: step 2/7. Its function is as follows. Catalyzes the dehydration of inosose (2-keto-myo-inositol, 2KMI or 2,4,6/3,5-pentahydroxycyclohexanone) to 3D-(3,5/4)-trihydroxycyclohexane-1,2-dione (D-2,3-diketo-4-deoxy-epi-inositol). This Lacticaseibacillus casei (Lactobacillus casei) protein is Inosose dehydratase.